Consider the following 629-residue polypeptide: Polyadenylate-binding protein, cytoplasmic and nuclear (629 aa).

The disordered stretch occupies residues 1-47; it reads MTLENKAEASPATKEETTTEAAPAEGEAKTESSEEKGSKEDQGDNAS. Positions 26 to 42 are enriched in basic and acidic residues; it reads GEAKTESSEEKGSKEDQ. 4 RRM domains span residues 46–124, 134–211, 227–304, and 330–407; these read ASLY…WSQR, GNIY…PHVP, TNVF…RAKK, and VNLY…LAQR. Residues 465 to 543 form a disordered region; the sequence is GANPQMMMRP…RRKDGESRVA (79 aa). Low complexity-rich tracts occupy residues 493 to 506 and 514 to 531; these read MYGA…QGGF and GGQP…QFRG. A PABC domain is found at 542–624; sequence VADSISNALE…AITAYNEYLN (83 aa).

This sequence belongs to the polyadenylate-binding protein type-1 family.

The protein localises to the cytoplasm. It is found in the nucleus. Its function is as follows. Binds the poly(A) tail of mRNA. Appears to be an important mediator of the multiple roles of the poly(A) tail in mRNA biogenesis, stability and translation. In the nucleus, involved in both mRNA cleavage and polyadenylation. Is also required for efficient mRNA export to the cytoplasm. Acts in concert with a poly(A)-specific nuclease (PAN) to affect poly(A) tail shortening, which may occur concomitantly with either nucleocytoplasmic mRNA transport or translational initiation. In the cytoplasm, stimulates translation initiation and regulates mRNA decay through translation termination-coupled poly(A) shortening, probably mediated by PAN. The chain is Polyadenylate-binding protein, cytoplasmic and nuclear (PAB1) from Yarrowia lipolytica (strain CLIB 122 / E 150) (Yeast).